A 200-amino-acid polypeptide reads, in one-letter code: Probable GTP-binding protein EngB (200 aa).

The 175-residue stretch at 25–199 folds into the EngB-type G domain; the sequence is SGYEVAFAGR…ISLLDRWYEW (175 aa). GTP contacts are provided by residues 33-40, 60-64, 78-81, 145-148, and 178-180; these read GRSNAGKS, GRTQL, DLPG, TKAD, and FSS. Residues Ser40 and Thr62 each contribute to the Mg(2+) site.

It belongs to the TRAFAC class TrmE-Era-EngA-EngB-Septin-like GTPase superfamily. EngB GTPase family. Requires Mg(2+) as cofactor.

Necessary for normal cell division and for the maintenance of normal septation. This is Probable GTP-binding protein EngB from Legionella pneumophila (strain Corby).